We begin with the raw amino-acid sequence, 591 residues long: Aspartate--tRNA(Asp/Asn) ligase (591 aa).

E176 lines the L-aspartate pocket. Residues 200-203 (QLFK) form an aspartate region. L-aspartate is bound at residue R222. Residues 222–224 (RDE) and Q231 contribute to the ATP site. Residue H450 coordinates L-aspartate. E484 lines the ATP pocket. R491 is a binding site for L-aspartate. 536–539 (GLDR) lines the ATP pocket.

The protein belongs to the class-II aminoacyl-tRNA synthetase family. Type 1 subfamily. Homodimer.

Its subcellular location is the cytoplasm. It carries out the reaction tRNA(Asx) + L-aspartate + ATP = L-aspartyl-tRNA(Asx) + AMP + diphosphate. Its function is as follows. Aspartyl-tRNA synthetase with relaxed tRNA specificity since it is able to aspartylate not only its cognate tRNA(Asp) but also tRNA(Asn). Reaction proceeds in two steps: L-aspartate is first activated by ATP to form Asp-AMP and then transferred to the acceptor end of tRNA(Asp/Asn). The sequence is that of Aspartate--tRNA(Asp/Asn) ligase from Bacillus anthracis (strain CDC 684 / NRRL 3495).